The chain runs to 626 residues: UvrABC system protein C (626 aa).

In terms of domain architecture, GIY-YIG spans 20 to 97 (ECSGVYKMLD…IKKFQPKFNI (78 aa)). A UVR domain is found at 207–242 (RELQENLSKKMQELSSQMRFEEAAEIRDRIKALSYV).

This sequence belongs to the UvrC family. Interacts with UvrB in an incision complex.

It localises to the cytoplasm. In terms of biological role, the UvrABC repair system catalyzes the recognition and processing of DNA lesions. UvrC both incises the 5' and 3' sides of the lesion. The N-terminal half is responsible for the 3' incision and the C-terminal half is responsible for the 5' incision. The chain is UvrABC system protein C from Rickettsia typhi (strain ATCC VR-144 / Wilmington).